Reading from the N-terminus, the 583-residue chain is Poly [ADP-ribose] polymerase 2 (583 aa).

The tract at residues 1–77 is disordered; it reads MAARRRRSTG…GMPGRSWASK (77 aa). Residues 1–103 form an N-terminal region (NTR) region; that stretch reads MAARRRRSTG…VDPECTAKVG (103 aa). 2 short sequence motifs (nuclear localization signal) span residues 21-22 and 35-40; these read KR and PAKKTR. 2 positions are modified to N6-acetyllysine: K37 and K38. Residues 57–67 are compositionally biased toward basic and acidic residues; that stretch reads ANKDRTEDKQD. The WGR domain occupies 104 to 201; that stretch reads KAHVYCEGND…EKFEKVPGKY (98 aa). 2 positions are modified to phosphoserine: S226 and S232. In terms of domain architecture, PARP alpha-helical spans 231 to 348; that stretch reads ESQLDLRVQE…DIEIAIKLVK (118 aa). In terms of domain architecture, PARP catalytic spans 356 to 583; it reads HPLDQHYRNL…KVQFNFLQLW (228 aa). Residues 428-430, G437, R444, and S470 each bind NAD(+); that span reads HGS. Catalysis depends on E558, which acts as the For poly [ADP-ribose] polymerase activity.

The protein belongs to the ARTD/PARP family. As to quaternary structure, component of a base excision repair (BER) complex, containing at least XRCC1, PARP1, POLB and LRIG3. Homo- and heterodimer with PARP1. Interacts (via the PARP catalytic domain) with HPF1. Interacts with core nucleosomes. In terms of processing, auto poly-ADP-ribosylated on serine residues, leading to dissociation of the PARP2-HPF1 complex from chromatin. Poly-ADP-ribosylated by PARP1. Acetylation reduces DNA binding and enzymatic activity. Post-translationally, proteolytically cleaved by caspase-8 (CASP8) in response to apoptosis, leading to its inactivation. As to expression, widely expressed, mainly in actively dividing tissues. The highest levels are in the brain, heart, pancreas, skeletal muscle and testis; also detected in kidney, liver, lung, placenta, ovary and spleen; levels are low in leukocytes, colon, small intestine, prostate and thymus.

It localises to the nucleus. The protein localises to the chromosome. The enzyme catalyses NAD(+) + (ADP-D-ribosyl)n-acceptor = nicotinamide + (ADP-D-ribosyl)n+1-acceptor + H(+).. It carries out the reaction L-seryl-[protein] + NAD(+) = O-(ADP-D-ribosyl)-L-seryl-[protein] + nicotinamide + H(+). The catalysed reaction is L-aspartyl-[protein] + NAD(+) = 4-O-(ADP-D-ribosyl)-L-aspartyl-[protein] + nicotinamide. It catalyses the reaction L-glutamyl-[protein] + NAD(+) = 5-O-(ADP-D-ribosyl)-L-glutamyl-[protein] + nicotinamide. ADP-ribosyltransferase activity is regulated via an allosteric activation mechanism. In absence of activation signal, PARP2 is autoinhibited by the PARP alpha-helical domain (also named HD region), which prevents effective NAD(+)-binding. Activity is highly stimulated by signals, which unfold the PARP alpha-helical domain, relieving autoinhibition. Poly-ADP-ribosyltransferase activity is tightly regulated and PARP2 is removed from damaged chromatin following initial poly-ADP-ribosylation of chromatin to avoid prolonged residence (trapping) that has cytotoxic consequences. CHD1L promotes PARP2 removal from chromatin. ADP-ribosyltransferase activity is inhibited by a number of PARP inhibitors (PARPi) compounds, that are used the treatment of breast or ovarian cancers that have defects in DNA repair by homologous recombination. PARPi molecules (niraparib, talazoparib, and, to a lesser extent, olaparib) also trap PARP2 at DNA damage sites. Functionally, poly-ADP-ribosyltransferase that mediates poly-ADP-ribosylation of proteins and plays a key role in DNA repair. Mediates glutamate, aspartate or serine ADP-ribosylation of proteins: the ADP-D-ribosyl group of NAD(+) is transferred to the acceptor carboxyl group of target residues and further ADP-ribosyl groups are transferred to the 2'-position of the terminal adenosine moiety, building up a polymer with an average chain length of 20-30 units. Serine ADP-ribosylation of proteins constitutes the primary form of ADP-ribosylation of proteins in response to DNA damage. Mediates glutamate and aspartate ADP-ribosylation of target proteins in absence of HPF1. Following interaction with HPF1, catalyzes serine ADP-ribosylation of target proteins; HPF1 conferring serine specificity by completing the PARP2 active site. PARP2 initiates the repair of double-strand DNA breaks: recognizes and binds DNA breaks within chromatin and recruits HPF1, licensing serine ADP-ribosylation of target proteins, such as histones, thereby promoting decompaction of chromatin and the recruitment of repair factors leading to the reparation of DNA strand breaks. HPF1 initiates serine ADP-ribosylation but restricts the polymerase activity of PARP2 in order to limit the length of poly-ADP-ribose chains. Specifically mediates formation of branched poly-ADP-ribosylation. Branched poly-ADP-ribose chains are specifically recognized by some factors, such as APLF. In addition to proteins, also able to ADP-ribosylate DNA: preferentially acts on 5'-terminal phosphates at DNA strand breaks termini in nicked duplex. The polypeptide is Poly [ADP-ribose] polymerase 2 (Homo sapiens (Human)).